The primary structure comprises 358 residues: 7,8-didemethyl-8-hydroxy-5-deazariboflavin synthase (358 aa).

The Radical SAM core domain maps to 35–275; that stretch reads ITYSKNVFIP…DDISIQIPPN (241 aa). The [4Fe-4S] cluster site is built by C49, C53, and C56.

Belongs to the radical SAM superfamily. CofG family. In terms of assembly, consists of two subunits, CofG and CofH. [4Fe-4S] cluster serves as cofactor.

The catalysed reaction is 5-amino-5-(4-hydroxybenzyl)-6-(D-ribitylimino)-5,6-dihydrouracil + S-adenosyl-L-methionine = 7,8-didemethyl-8-hydroxy-5-deazariboflavin + 5'-deoxyadenosine + L-methionine + NH4(+) + H(+). Its pathway is cofactor biosynthesis; coenzyme F0 biosynthesis. Catalyzes the radical-mediated synthesis of 7,8-didemethyl-8-hydroxy-5-deazariboflavin (FO) from 5-amino-5-(4-hydroxybenzyl)-6-(D-ribitylimino)-5,6-dihydrouracil. This chain is 7,8-didemethyl-8-hydroxy-5-deazariboflavin synthase (cofG), found in Methanocaldococcus jannaschii (strain ATCC 43067 / DSM 2661 / JAL-1 / JCM 10045 / NBRC 100440) (Methanococcus jannaschii).